Consider the following 176-residue polypeptide: Xanthine-guanine phosphoribosyltransferase (176 aa).

5-phospho-alpha-D-ribose 1-diphosphate is bound by residues 51–52 (RG), R88, and 111–119 (DDLVDSGKT). R88 lines the GMP pocket. D112 contacts Mg(2+). Guanine contacts are provided by D115 and I158. Xanthine-binding residues include D115 and I158. Residues 115-119 (DSGKT) and 157-158 (WI) each bind GMP.

It belongs to the purine/pyrimidine phosphoribosyltransferase family. XGPT subfamily. As to quaternary structure, homotetramer. Mg(2+) is required as a cofactor.

The protein resides in the cell inner membrane. The catalysed reaction is GMP + diphosphate = guanine + 5-phospho-alpha-D-ribose 1-diphosphate. It carries out the reaction XMP + diphosphate = xanthine + 5-phospho-alpha-D-ribose 1-diphosphate. The enzyme catalyses IMP + diphosphate = hypoxanthine + 5-phospho-alpha-D-ribose 1-diphosphate. It functions in the pathway purine metabolism; GMP biosynthesis via salvage pathway; GMP from guanine: step 1/1. The protein operates within purine metabolism; XMP biosynthesis via salvage pathway; XMP from xanthine: step 1/1. In terms of biological role, purine salvage pathway enzyme that catalyzes the transfer of the ribosyl-5-phosphate group from 5-phospho-alpha-D-ribose 1-diphosphate (PRPP) to the N9 position of the 6-oxopurines guanine and xanthine to form the corresponding ribonucleotides GMP (guanosine 5'-monophosphate) and XMP (xanthosine 5'-monophosphate), with the release of PPi. To a lesser extent, also acts on hypoxanthine. The chain is Xanthine-guanine phosphoribosyltransferase from Ruegeria sp. (strain TM1040) (Silicibacter sp.).